Here is a 950-residue protein sequence, read N- to C-terminus: MLFSWREDPGAQCLLLSLLLLAASEVGSGQLHYSVSEEAKHGTFVGRIAQDLGLELAELVPRLFRVASKRHGDLLEVNLQNGILFVNSRIDREELCGRSAECSIHLEVIVDRPLQVFHVEVEVKDINDNAPVFPMSVKNLFISESRQPGSRFSLEGASDADIGTNSLLTYSLDSTEYFTLDVKRNDEEIKSLGLVLKKYLNREDTPKHYLLITAIDGGKPELTGTTQLKITVLDVNDNAPAFERTIYKVRLLENAPNGTLVVTVNATDLDEGVNKDIAYSFNTDMSADILSKFHLDPVNGQISVKGNIDFEESKSYEIQVEATDKGNPPMSDHCTVLLEIVDINDNVPELVIHSLSLPVLEDSPLSTVIALISVSDRDSGVNGQVTCSLTPHVPFKLVSTFKNYYSLVLDSPLDRESVSAYELVVTARDGGSPSLWATASVSVEVADVNDNAPAFSQSEYTVFVKENNPPGCHIFTVSARDADAQENALVSYSLVERRVGDRALSSYVSVHAESGKVYALQPLDHEELELLQFQVSARDAGVPPLGSNVTLQVFVLDENDNAPALLMPRVGGIGGAVSELVPRSVGAGHVVAKVRAVDADSGYNAWLXYELQPGTGGARIPFRVGLYTGEISTTRALDEVDVPRHRLLVLVKDHGEPSLTATATVLVSLVESGQAPKASSQASAGATGPEAALVDVNVYLIVAICAVSSLLVLTLLLYTALRCSAPPTEGACGPGKPTLVCSSAVGSWSYSQQRQQRVCSGEGLPKTDLMAFSPSLPPCPISRDREEKQDVDVDLSAKPRQPNPDWRYSASLRAGMHSSVHLEEAGILRAGPGGPDQQWPTVSSATPEPEAGEVSPPVGAGVNSNSWTFKYGPGNPKQSGPGELPDKFIIPGSPAIISIRQEPANSQIDKSDFITFGKKEETKKKKKKKKGNKTQEKKEKGNSTTDNSDQ.

The N-terminal stretch at 1–29 (MLFSWREDPGAQCLLLSLLLLAASEVGSG) is a signal peptide. Cadherin domains are found at residues 30–133 (QLHY…APVF), 134–242 (PMSV…APAF), 243–350 (ERTI…VPEL), 351–455 (VIHS…APAF), 456–565 (SQSE…APAL), and 581–678 (VPRS…APKA). Topologically, residues 30 to 697 (QLHYSVSEEA…GPEAALVDVN (668 aa)) are extracellular. Asn257 and Asn265 each carry an N-linked (GlcNAc...) asparagine glycan. Asn548 carries an N-linked (GlcNAc...) asparagine glycan. Residues 698-718 (VYLIVAICAVSSLLVLTLLLY) form a helical membrane-spanning segment. Residues 719–950 (TALRCSAPPT…GNSTTDNSDQ (232 aa)) lie on the Cytoplasmic side of the membrane. PXXP repeat units lie at residues 734 to 737 (PGKP) and 774 to 777 (PSLP). Positions 734–894 (PGKPTLVCSS…PDKFIIPGSP (161 aa)) are 6 X 4 AA repeats of P-X-X-P. Disordered regions lie at residues 777–806 (PPCPISRDREEKQDVDVDLSAKPRQPNPDW), 831–856 (GPGGPDQQWPTVSSATPEPEAGEVSP), and 869–889 (FKYGPGNPKQSGPGELPDKFI). Basic and acidic residues predominate over residues 782-797 (SRDREEKQDVDVDLSA). PXXP repeat units lie at residues 799–802 (PRQP), 832–835 (PGGP), 873–876 (PGNP), and 891–894 (PGSP). The disordered stretch occupies residues 901–950 (QEPANSQIDKSDFITFGKKEETKKKKKKKKGNKTQEKKEKGNSTTDNSDQ). The span at 909 to 923 (DKSDFITFGKKEETK) shows a compositional bias: basic and acidic residues.

The protein resides in the cell membrane. Functionally, potential calcium-dependent cell-adhesion protein. May be involved in the establishment and maintenance of specific neuronal connections in the brain. This chain is Protocadherin alpha-3 (PCDHA3), found in Pan troglodytes (Chimpanzee).